A 520-amino-acid polypeptide reads, in one-letter code: GMP synthase [glutamine-hydrolyzing] (520 aa).

Residues 9–202 enclose the Glutamine amidotransferase type-1 domain; it reads TILIIDFGSQ…VHRIVGVKPG (194 aa). The active-site Nucleophile is the Cys86. Catalysis depends on residues His176 and Glu178. The GMPS ATP-PPase domain occupies 203–395; it reads WTMGAYREQA…LGLPDSFIGR (193 aa). 230-236 provides a ligand contact to ATP; that stretch reads SGGVDSS.

Homodimer.

It carries out the reaction XMP + L-glutamine + ATP + H2O = GMP + L-glutamate + AMP + diphosphate + 2 H(+). It functions in the pathway purine metabolism; GMP biosynthesis; GMP from XMP (L-Gln route): step 1/1. Its function is as follows. Catalyzes the synthesis of GMP from XMP. This chain is GMP synthase [glutamine-hydrolyzing], found in Brucella canis (strain ATCC 23365 / NCTC 10854 / RM-666).